A 467-amino-acid polypeptide reads, in one-letter code: ATP-dependent protease ATPase subunit HslU (467 aa).

ATP-binding positions include Ile-20, 62 to 67, Asp-280, Glu-345, and Arg-417; that span reads GVGKTE.

Belongs to the ClpX chaperone family. HslU subfamily. In terms of assembly, a double ring-shaped homohexamer of HslV is capped on each side by a ring-shaped HslU homohexamer. The assembly of the HslU/HslV complex is dependent on binding of ATP.

It is found in the cytoplasm. In terms of biological role, ATPase subunit of a proteasome-like degradation complex; this subunit has chaperone activity. The binding of ATP and its subsequent hydrolysis by HslU are essential for unfolding of protein substrates subsequently hydrolyzed by HslV. HslU recognizes the N-terminal part of its protein substrates and unfolds these before they are guided to HslV for hydrolysis. The protein is ATP-dependent protease ATPase subunit HslU of Ligilactobacillus salivarius (strain UCC118) (Lactobacillus salivarius).